The chain runs to 124 residues: Large ribosomal subunit protein bL12 (124 aa).

The protein belongs to the bacterial ribosomal protein bL12 family. As to quaternary structure, homodimer. Part of the ribosomal stalk of the 50S ribosomal subunit. Forms a multimeric L10(L12)X complex, where L10 forms an elongated spine to which 2 to 4 L12 dimers bind in a sequential fashion. Binds GTP-bound translation factors.

Functionally, forms part of the ribosomal stalk which helps the ribosome interact with GTP-bound translation factors. Is thus essential for accurate translation. In Herminiimonas arsenicoxydans, this protein is Large ribosomal subunit protein bL12.